A 123-amino-acid polypeptide reads, in one-letter code: Small ribosomal subunit protein uS12 (123 aa).

Asp89 bears the 3-methylthioaspartic acid mark.

Belongs to the universal ribosomal protein uS12 family. As to quaternary structure, part of the 30S ribosomal subunit. Contacts proteins S8 and S17. May interact with IF1 in the 30S initiation complex.

Its function is as follows. With S4 and S5 plays an important role in translational accuracy. In terms of biological role, interacts with and stabilizes bases of the 16S rRNA that are involved in tRNA selection in the A site and with the mRNA backbone. Located at the interface of the 30S and 50S subunits, it traverses the body of the 30S subunit contacting proteins on the other side and probably holding the rRNA structure together. The combined cluster of proteins S8, S12 and S17 appears to hold together the shoulder and platform of the 30S subunit. The chain is Small ribosomal subunit protein uS12 from Rhodopseudomonas palustris (strain BisA53).